A 278-amino-acid polypeptide reads, in one-letter code: Large ribosomal subunit protein uL2 (278 aa).

Residues 214 to 278 are disordered; the sequence is WLGKRPHNRG…IMRSRHQRKS (65 aa).

Belongs to the universal ribosomal protein uL2 family. In terms of assembly, part of the 50S ribosomal subunit. Forms a bridge to the 30S subunit in the 70S ribosome.

Functionally, one of the primary rRNA binding proteins. Required for association of the 30S and 50S subunits to form the 70S ribosome, for tRNA binding and peptide bond formation. It has been suggested to have peptidyltransferase activity; this is somewhat controversial. Makes several contacts with the 16S rRNA in the 70S ribosome. This chain is Large ribosomal subunit protein uL2, found in Chelativorans sp. (strain BNC1).